Here is a 182-residue protein sequence, read N- to C-terminus: Keratin, type II cytoskeletal 60 kDa, component III (182 aa).

The region spanning 1 to 63 (ERGELALKDA…KLLEGEECRL (63 aa)) is the IF rod domain. The coil 2 stretch occupies residues 1–63 (ERGELALKDA…KLLEGEECRL (63 aa)). A tail region spans residues 63 to 182 (LSGEGVGPVN…TSSSRKSFKS (120 aa)). The tract at residues 157–182 (FGSGGGSSSSVKFVSTTSSSRKSFKS) is disordered. The segment covering 164–182 (SSSVKFVSTTSSSRKSFKS) has biased composition (low complexity).

Belongs to the intermediate filament family. In terms of assembly, heterotetramer of two type I and two type II keratins.

This Bos taurus (Bovine) protein is Keratin, type II cytoskeletal 60 kDa, component III.